Reading from the N-terminus, the 803-residue chain is PR domain zinc finger protein 4 (803 aa).

In terms of domain architecture, SET spans 408–532 (KQLVLRQSIV…PESELLFYYS (125 aa)). 5 C2H2-type zinc fingers span residues 593–615 (WKCSMCPQAFISPSKLHVHFMGH), 621–643 (HKCDFCSKAFSDPSNLRTHLKIH), 649–671 (YRCTLCDKSFTQKAHLESHMVIH), 677–699 (LKCDYCDKLFMRRQDLKQHVLIH), and 705–727 (IKCPKCDKLFLRTNHLKKHLNSH). The C2H2-type 6; degenerate zinc finger occupies 733–755 (YVCEKCTKAYLTKYHLTRHLKTC). Residues 757–803 (EPSSSSSAQEEEDDESEEEDLADSMRTEDCRMGSAVYSTDESLSAHK) are disordered. Over residues 765–778 (QEEEDDESEEEDLA) the composition is skewed to acidic residues. The segment covering 792–803 (VYSTDESLSAHK) has biased composition (polar residues).

The protein belongs to the class V-like SAM-binding methyltransferase superfamily.

The protein localises to the nucleus. May function as a transcription factor involved in cell differentiation. This Mus musculus (Mouse) protein is PR domain zinc finger protein 4 (Prdm4).